Consider the following 191-residue polypeptide: Orotate phosphoribosyltransferase (191 aa).

A 5-phospho-alpha-D-ribose 1-diphosphate-binding site is contributed by 114–122 (EDVITTGGS). Orotate is bound by residues T118 and R146.

The protein belongs to the purine/pyrimidine phosphoribosyltransferase family. PyrE subfamily. As to quaternary structure, homodimer. It depends on Mg(2+) as a cofactor.

It catalyses the reaction orotidine 5'-phosphate + diphosphate = orotate + 5-phospho-alpha-D-ribose 1-diphosphate. Its pathway is pyrimidine metabolism; UMP biosynthesis via de novo pathway; UMP from orotate: step 1/2. Functionally, catalyzes the transfer of a ribosyl phosphate group from 5-phosphoribose 1-diphosphate to orotate, leading to the formation of orotidine monophosphate (OMP). The chain is Orotate phosphoribosyltransferase from Desulforamulus reducens (strain ATCC BAA-1160 / DSM 100696 / MI-1) (Desulfotomaculum reducens).